Here is a 392-residue protein sequence, read N- to C-terminus: MSSLLVDNIGELVTNAGAGDGPLGIRRNAAVLVEDGLVAWVGPNRYPPPADRRIDAEGAAVLPGFVDSHAHLVFAGDRAAEFAARMAGEPYTGGGIRTTVGATRAATDDELRATVRRLRGEALRQGTTTVEIKSGYGLTVPDETRSLRLAAEVSEETTFLGAHLVPAEYADRPDDYVGLVCGPMLAAAAPHARWIDVFCERGAFDADHTRAILTCGQAAGLGARLHANQLGPGPGVQLGVELGAASVDHCTHLTDADVDALAGAGGATVATLLPGAEFSTRSPYPDARRLLDAGVTVALATDCNPGSSYTSSMPFCIALAVREMRMSPTEAVWAATAGGAAALRRTDVGQLTPGARADLMILDAPSHLHLAYRPGVPLIRQVLHNGVPQCRP.

The Fe(3+) site is built by His69 and His71. Zn(2+)-binding residues include His69 and His71. 3 residues coordinate 4-imidazolone-5-propanoate: Arg78, Tyr136, and His163. Residue Tyr136 participates in N-formimidoyl-L-glutamate binding. His226 provides a ligand contact to Fe(3+). His226 is a binding site for Zn(2+). Gln229 contributes to the 4-imidazolone-5-propanoate binding site. Asp302 lines the Fe(3+) pocket. Residue Asp302 participates in Zn(2+) binding. The N-formimidoyl-L-glutamate site is built by Asn304 and Gly306. Ser307 contacts 4-imidazolone-5-propanoate.

Belongs to the metallo-dependent hydrolases superfamily. HutI family. The cofactor is Zn(2+). It depends on Fe(3+) as a cofactor.

It is found in the cytoplasm. The enzyme catalyses 4-imidazolone-5-propanoate + H2O = N-formimidoyl-L-glutamate. Its pathway is amino-acid degradation; L-histidine degradation into L-glutamate; N-formimidoyl-L-glutamate from L-histidine: step 3/3. Its function is as follows. Catalyzes the hydrolytic cleavage of the carbon-nitrogen bond in imidazolone-5-propanoate to yield N-formimidoyl-L-glutamate. It is the third step in the universal histidine degradation pathway. This is Imidazolonepropionase from Salinispora arenicola (strain CNS-205).